A 427-amino-acid polypeptide reads, in one-letter code: Glutamate-1-semialdehyde 2,1-aminomutase (427 aa).

The residue at position 265 (Lys265) is an N6-(pyridoxal phosphate)lysine.

Belongs to the class-III pyridoxal-phosphate-dependent aminotransferase family. HemL subfamily. Homodimer. Pyridoxal 5'-phosphate serves as cofactor.

Its subcellular location is the cytoplasm. It carries out the reaction (S)-4-amino-5-oxopentanoate = 5-aminolevulinate. It functions in the pathway porphyrin-containing compound metabolism; protoporphyrin-IX biosynthesis; 5-aminolevulinate from L-glutamyl-tRNA(Glu): step 2/2. This Burkholderia cenocepacia (strain HI2424) protein is Glutamate-1-semialdehyde 2,1-aminomutase.